A 295-amino-acid polypeptide reads, in one-letter code: 4-hydroxy-tetrahydrodipicolinate synthase (295 aa).

Thr48 contacts pyruvate. Tyr136 (proton donor/acceptor) is an active-site residue. The active-site Schiff-base intermediate with substrate is Lys164. Position 206 (Ile206) interacts with pyruvate.

Belongs to the DapA family. In terms of assembly, homotetramer; dimer of dimers.

Its subcellular location is the cytoplasm. The enzyme catalyses L-aspartate 4-semialdehyde + pyruvate = (2S,4S)-4-hydroxy-2,3,4,5-tetrahydrodipicolinate + H2O + H(+). The protein operates within amino-acid biosynthesis; L-lysine biosynthesis via DAP pathway; (S)-tetrahydrodipicolinate from L-aspartate: step 3/4. Its function is as follows. Catalyzes the condensation of (S)-aspartate-beta-semialdehyde [(S)-ASA] and pyruvate to 4-hydroxy-tetrahydrodipicolinate (HTPA). This Actinobacillus pleuropneumoniae serotype 7 (strain AP76) protein is 4-hydroxy-tetrahydrodipicolinate synthase.